Reading from the N-terminus, the 436-residue chain is uncharacterized protein (436 aa).

This is an uncharacterized protein from Treponema pallidum (strain Nichols).